Here is a 448-residue protein sequence, read N- to C-terminus: Divalent metal cation transporter MntH (448 aa).

Helical transmembrane passes span L41–W61, S69–L89, G117–I137, F147–F167, I176–V196, I215–P235, F270–F290, L307–A327, V363–E383, L384–V404, and I424–T444.

It belongs to the NRAMP family.

Its subcellular location is the cell membrane. Its function is as follows. H(+)-stimulated, divalent metal cation uptake system. In Listeria innocua serovar 6a (strain ATCC BAA-680 / CLIP 11262), this protein is Divalent metal cation transporter MntH.